The primary structure comprises 442 residues: MSNSLNSSKYQPLTTRQGDRIAVVSGIRTPFAKQSTAFSTTPAVDLGKLTVKALMDKTDIDPKLIDQVVFGQVVQMPEAPNIAREIVLGTGMNIGTDAYSVTRACATSFQTTANVVESIMAGTIDIGIAGGADSSSVLPIGVSKKLASTLLALSKTKTVYQKLSLLRTLSLKDIAPVPPAVAEYSTGISMGQTAEQMAKSHGITREEQDALAHRSHTLAAKAWKDGLIQDEVMTAFPEPYTVWLDHDNNIRHDSELASYAKLRPAFDRKYGSVTAANSTPLTDGGAALLLMSEKRAKELGYEPLGYIRSFAFSAIDVHHDMLMGPSYATPMALDKAGISLSDLTLIDMHEAFAAQTLSNVKMFASNKFARECLGRDKAIGEIDMDKFNVLGGSIAYGHPFAATGARMIIQTLRELKRRGGGLGLNTACAAGGLGAAMVLEVE.

C105 (acyl-thioester intermediate) is an active-site residue. Active-site proton acceptor residues include H398 and C428.

The protein belongs to the thiolase-like superfamily. Thiolase family. As to quaternary structure, heterotetramer of two alpha chains (FadJ) and two beta chains (FadI).

It localises to the cytoplasm. It carries out the reaction an acyl-CoA + acetyl-CoA = a 3-oxoacyl-CoA + CoA. Its pathway is lipid metabolism; fatty acid beta-oxidation. Functionally, catalyzes the final step of fatty acid oxidation in which acetyl-CoA is released and the CoA ester of a fatty acid two carbons shorter is formed. The protein is 3-ketoacyl-CoA thiolase of Aliivibrio fischeri (strain MJ11) (Vibrio fischeri).